The primary structure comprises 70 residues: Small ribosomal subunit protein bS21 (70 aa).

Belongs to the bacterial ribosomal protein bS21 family.

This chain is Small ribosomal subunit protein bS21, found in Neisseria gonorrhoeae (strain ATCC 700825 / FA 1090).